The sequence spans 508 residues: 2'-5'-oligoadenylate synthase-like protein 2 (508 aa).

S69 is a binding site for ATP. Mg(2+)-binding residues include D81, D83, and D154. 2 residues coordinate ATP: R213 and K216. The Ubiquitin-like domain occupies 435–473; the sequence is ILVFVKYPGGQSKPFTIDPDDTILDLKEKIEDAGGPCAE.

Belongs to the 2-5A synthase family. Mg(2+) is required as a cofactor. In terms of tissue distribution, strongly expressed in spleen dendritic cells, whereas, in bone marrow-derived dendritic cells, the amount increases during the maturation process. Expressed in many organs, the highest levels being in thymus, lung, and bone marrow.

The catalysed reaction is 3 ATP = 5'-triphosphoadenylyl-(2'-&gt;5')-adenylyl-(2'-&gt;5')-adenosine + 2 diphosphate. Its activity is regulated as follows. Produced as a latent enzyme which is activated by dsRNA generated during the course of viral infection. The dsRNA activator must be at least 15 nucleotides long, and no modification of the 2'-hydroxyl group is tolerated. ssRNA or dsDNA do not act as activators. In terms of biological role, interferon-induced, dsRNA-activated antiviral enzyme which plays a critical role in cellular innate antiviral response. Synthesizes oligomers of 2'-5'-oligoadenylates (2-5A) from ATP which then bind to the inactive monomeric form of ribonuclease L (RNase L) leading to its dimerization and subsequent activation. Activation of RNase L leads to degradation of cellular as well as viral RNA, resulting in the inhibition of protein synthesis, thus terminating viral replication. Can mediate the antiviral effect via the classical RNase L-dependent pathway or an alternative antiviral pathway independent of RNase L. The polypeptide is 2'-5'-oligoadenylate synthase-like protein 2 (Oasl2) (Mus musculus (Mouse)).